A 93-amino-acid polypeptide reads, in one-letter code: Cell division protein CrgA (93 aa).

2 helical membrane passes run 31–51 and 70–90; these read VWFV…LMVF and LGPW…LLTM.

This sequence belongs to the CrgA family.

The protein resides in the cell membrane. Involved in cell division. The chain is Cell division protein CrgA from Mycobacterium marinum (strain ATCC BAA-535 / M).